Reading from the N-terminus, the 348-residue chain is ELAV-like protein 3 (348 aa).

RRM domains follow at residues T34–P112, A120–N200, and W265–S343.

This sequence belongs to the RRM elav family. Expression is neural-specific in both embryos and adults. Expressed from neurula stage onwards in primary motor-, inter- and sensory-neurons. Expressed in the closing neural tube and motor neurons of stage 18 embryos, and primarily in the ventricular zone and dorsal region of the tailbud and adult brain. Expressed from stage 26 onwards in the differentiating ganglion cell layer of the retina, extending to the inner nuclear layer at later stages.

RNA-binding protein that binds to AU-rich element (ARE) sequences of target mRNAs. May also bind poly-A tracts via RRM 3. May be involved in neuronal differentiation and maintenance. In Xenopus laevis (African clawed frog), this protein is ELAV-like protein 3 (elavl3).